Here is a 125-residue protein sequence, read N- to C-terminus: Small ribosomal subunit protein uS12 (125 aa).

3-methylthioaspartic acid is present on D89. The tract at residues 105-125 (QGVKDRKQSRSKYGAKKPKAK) is disordered. Over residues 113–125 (SRSKYGAKKPKAK) the composition is skewed to basic residues.

The protein belongs to the universal ribosomal protein uS12 family. In terms of assembly, part of the 30S ribosomal subunit. Contacts proteins S8 and S17. May interact with IF1 in the 30S initiation complex.

Its function is as follows. With S4 and S5 plays an important role in translational accuracy. Interacts with and stabilizes bases of the 16S rRNA that are involved in tRNA selection in the A site and with the mRNA backbone. Located at the interface of the 30S and 50S subunits, it traverses the body of the 30S subunit contacting proteins on the other side and probably holding the rRNA structure together. The combined cluster of proteins S8, S12 and S17 appears to hold together the shoulder and platform of the 30S subunit. This is Small ribosomal subunit protein uS12 from Delftia acidovorans (strain DSM 14801 / SPH-1).